Reading from the N-terminus, the 549-residue chain is Maturase K (549 aa).

This sequence belongs to the intron maturase 2 family. MatK subfamily.

The protein localises to the plastid. The protein resides in the chloroplast. Its function is as follows. Usually encoded in the trnK tRNA gene intron. Probably assists in splicing its own and other chloroplast group II introns. The polypeptide is Maturase K (Albidella oligococca (Caldesia oligococca)).